The chain runs to 258 residues: Thiazole synthase (258 aa).

Lys-98 (schiff-base intermediate with DXP) is an active-site residue. 1-deoxy-D-xylulose 5-phosphate is bound by residues Gly-159, 185 to 186 (AG), and 207 to 208 (NT).

This sequence belongs to the ThiG family. Homotetramer. Forms heterodimers with either ThiH or ThiS.

Its subcellular location is the cytoplasm. It carries out the reaction [ThiS sulfur-carrier protein]-C-terminal-Gly-aminoethanethioate + 2-iminoacetate + 1-deoxy-D-xylulose 5-phosphate = [ThiS sulfur-carrier protein]-C-terminal Gly-Gly + 2-[(2R,5Z)-2-carboxy-4-methylthiazol-5(2H)-ylidene]ethyl phosphate + 2 H2O + H(+). Its pathway is cofactor biosynthesis; thiamine diphosphate biosynthesis. In terms of biological role, catalyzes the rearrangement of 1-deoxy-D-xylulose 5-phosphate (DXP) to produce the thiazole phosphate moiety of thiamine. Sulfur is provided by the thiocarboxylate moiety of the carrier protein ThiS. In vitro, sulfur can be provided by H(2)S. This chain is Thiazole synthase, found in Bacillus thuringiensis subsp. konkukian (strain 97-27).